Consider the following 64-residue polypeptide: Translation machinery-associated protein 7 (64 aa).

The disordered stretch occupies residues 1-64 (MSGREGGKKK…GGGIKKSGKK (64 aa)). A coiled-coil region spans residues 21-50 (EMDEDEMAFKQKQKEDQKAMEQLKAKAAGK). The segment covering 27-44 (MAFKQKQKEDQKAMEQLK) has biased composition (basic and acidic residues). Gly residues predominate over residues 52 to 64 (PLTGGGIKKSGKK).

The protein belongs to the TMA7 family.

The sequence is that of Translation machinery-associated protein 7 (tma7) from Danio rerio (Zebrafish).